The following is a 372-amino-acid chain: Glutamate 5-kinase (372 aa).

Lys14 serves as a coordination point for ATP. Substrate is bound by residues Ser54, Asp141, and Asn153. ATP-binding positions include 173-174 (TD) and 215-221 (TGGMATK). Residues 280-358 (RGKLILDQGA…DDIESLLGYD (79 aa)) enclose the PUA domain.

It belongs to the glutamate 5-kinase family.

It localises to the cytoplasm. It carries out the reaction L-glutamate + ATP = L-glutamyl 5-phosphate + ADP. Its pathway is amino-acid biosynthesis; L-proline biosynthesis; L-glutamate 5-semialdehyde from L-glutamate: step 1/2. Its function is as follows. Catalyzes the transfer of a phosphate group to glutamate to form L-glutamate 5-phosphate. The polypeptide is Glutamate 5-kinase (Shewanella sediminis (strain HAW-EB3)).